The following is a 210-amino-acid chain: Glycerol-3-phosphate acyltransferase (210 aa).

Helical transmembrane passes span methionine 1–glycine 21, glycine 53–alanine 73, isoleucine 87–tryptophan 107, valine 122–leucine 142, and isoleucine 147–proline 167.

This sequence belongs to the PlsY family. As to quaternary structure, probably interacts with PlsX.

The protein localises to the cell inner membrane. It carries out the reaction an acyl phosphate + sn-glycerol 3-phosphate = a 1-acyl-sn-glycero-3-phosphate + phosphate. It functions in the pathway lipid metabolism; phospholipid metabolism. Catalyzes the transfer of an acyl group from acyl-phosphate (acyl-PO(4)) to glycerol-3-phosphate (G3P) to form lysophosphatidic acid (LPA). This enzyme utilizes acyl-phosphate as fatty acyl donor, but not acyl-CoA or acyl-ACP. The sequence is that of Glycerol-3-phosphate acyltransferase from Synechococcus elongatus (strain ATCC 33912 / PCC 7942 / FACHB-805) (Anacystis nidulans R2).